The chain runs to 82 residues: UPF0154 protein SMU_1719c (82 aa).

A helical transmembrane segment spans residues 4-24; the sequence is FLWILLVIIALLAGLVGGTFI.

It belongs to the UPF0154 family.

The protein localises to the membrane. The chain is UPF0154 protein SMU_1719c from Streptococcus mutans serotype c (strain ATCC 700610 / UA159).